A 234-amino-acid chain; its full sequence is Sugar fermentation stimulation protein homolog (234 aa).

It belongs to the SfsA family.

This is Sugar fermentation stimulation protein homolog from Shewanella sp. (strain ANA-3).